Consider the following 248-residue polypeptide: Tetraspanin-16 (248 aa).

The Cytoplasmic segment spans residues 1-7 (MSEIRTG). A helical transmembrane segment spans residues 8 to 28 (FLTMATIILICIGLTMTGTGL). Residues 29 to 44 (YYRKTVSKCIRETDGS) lie on the Extracellular side of the membrane. The chain crosses the membrane as a helical span at residues 45 to 65 (FVVIGLLLLVIPQFALYAICC). The Cytoplasmic portion of the chain corresponds to 66 to 69 (HSKR). Residues 70–90 (MFTIYIYAMIFVSIVLGGYSL) traverse the membrane as a helical segment. Residues 91–208 (KCFIYNTTFG…MSILKAIVHQ (118 aa)) lie on the Extracellular side of the membrane. 2 N-linked (GlcNAc...) asparagine glycosylation sites follow: Asn96 and Asn141. A helical transmembrane segment spans residues 209 to 229 (WKYLSMFSYPALFLVCLSLAI). Topologically, residues 230-248 (SRSIMDTFDEPDDYRGYYS) are cytoplasmic.

The protein belongs to the tetraspanin (TM4SF) family.

It localises to the membrane. In terms of biological role, may be involved in the regulation of cell differentiation. The chain is Tetraspanin-16 (TET16) from Arabidopsis thaliana (Mouse-ear cress).